Reading from the N-terminus, the 357-residue chain is uncharacterized protein (357 aa).

Transmembrane regions (helical) follow at residues 13–33 (PVTGIYNILLFNLFPLATYLV), 44–64 (IACTLLCSITVILAYRMCAVY), 72–92 (VSTFGLAYGFLIMMSLRTCFL), 148–168 (VLTYKSLGIRTAVYVGAFCFV), 181–201 (LPISANPWYIQVAFCVTSGFF), 203–223 (YLFINALYYLFAIIFVPLGIW), 266–286 (IALTGSKFLASCSCFFLSALF), 293–313 (SISGRCSPAFFFQLLIQPFLI), and 327–347 (YWVLIIEMLINGTYGMGVVLL).

It is found in the mitochondrion membrane. This is an uncharacterized protein from Schizosaccharomyces pombe (strain 972 / ATCC 24843) (Fission yeast).